We begin with the raw amino-acid sequence, 259 residues long: Phosphatidylglycerol--prolipoprotein diacylglyceryl transferase (259 aa).

The next 4 membrane-spanning stretches (helical) occupy residues 16-36 (LAISWYSLSYVIGILLGWFYA), 55-75 (FITYAVIGIIVGGRLGFVLLY), 92-112 (EGGMSFHGGALGGIIAAYLFC), and 117-137 (INFLSLTDIIAPVVPIGLFLG). A 1,2-diacyl-sn-glycero-3-phospho-(1'-sn-glycerol) is bound at residue arginine 138. Helical transmembrane passes span 172 to 192 (QLYEAFFEGLVLFSILAYATF), 201 to 221 (GLNSGIFFTFYGLFRITIEIF), and 228 to 248 (IGFILDSLTMGQILSVPMLLL).

The protein belongs to the Lgt family.

It localises to the cell inner membrane. It carries out the reaction L-cysteinyl-[prolipoprotein] + a 1,2-diacyl-sn-glycero-3-phospho-(1'-sn-glycerol) = an S-1,2-diacyl-sn-glyceryl-L-cysteinyl-[prolipoprotein] + sn-glycerol 1-phosphate + H(+). It participates in protein modification; lipoprotein biosynthesis (diacylglyceryl transfer). In terms of biological role, catalyzes the transfer of the diacylglyceryl group from phosphatidylglycerol to the sulfhydryl group of the N-terminal cysteine of a prolipoprotein, the first step in the formation of mature lipoproteins. The sequence is that of Phosphatidylglycerol--prolipoprotein diacylglyceryl transferase from Rickettsia rickettsii (strain Iowa).